We begin with the raw amino-acid sequence, 263 residues long: uncharacterized protein (263 aa).

Residue Ala16 to Thr23 coordinates ATP.

To M.jannaschii MJ0547 and MJ0169.

This is an uncharacterized protein from Methanocaldococcus jannaschii (strain ATCC 43067 / DSM 2661 / JAL-1 / JCM 10045 / NBRC 100440) (Methanococcus jannaschii).